The following is a 415-amino-acid chain: Beta-1,4-glucuronyltransferase 1 (415 aa).

At 1-8 the chain is on the cytoplasmic side; that stretch reads MQMSYAIR. A helical; Signal-anchor for type II membrane protein transmembrane segment spans residues 9–36; it reads CAFYQLLLAALMLVAMLQLLYLSLLSGL. Residues 37-415 are Lumenal-facing; it reads HGQEEQDQYF…AKYPNSPRRC (379 aa). N204 carries N-linked (GlcNAc...) asparagine glycosylation. Residues D227 and D229 each coordinate Mn(2+). N300 is a glycosylation site (N-linked (GlcNAc...) asparagine).

Belongs to the glycosyltransferase 49 family. As to quaternary structure, interacts with LARGE1 and LARGE2. Requires Mn(2+) as cofactor.

The protein localises to the golgi apparatus membrane. The catalysed reaction is 3-O-[beta-D-Xyl-(1-&gt;4)-Rib-ol-P-Rib-ol-P-3-beta-D-GalNAc-(1-&gt;3)-beta-D-GlcNAc-(1-&gt;4)-(O-6-P-alpha-D-Man)]-Thr-[protein] + UDP-alpha-D-glucuronate = 3-O-[beta-D-GlcA-(1-&gt;3)-beta-D-Xyl-(1-&gt;4)-Rib-ol-P-Rib-ol-P-3-beta-D-GalNAc-(1-&gt;3)-beta-D-GlcNAc-(1-&gt;4)-(O-6-P-alpha-D-Man)]-Thr-[protein] + UDP + H(+). Its pathway is protein modification; protein glycosylation. Beta-1,4-glucuronyltransferase involved in O-mannosylation of alpha-dystroglycan (DAG1). Transfers a glucuronic acid (GlcA) residue onto a xylose (Xyl) acceptor to produce the glucuronyl-beta-1,4-xylose-beta disaccharide primer, which is further elongated by LARGE1, during synthesis of phosphorylated O-mannosyl glycan. Phosphorylated O-mannosyl glycan is a carbohydrate structure present in alpha-dystroglycan (DAG1), which is required for binding laminin G-like domain-containing extracellular proteins with high affinity. Required for axon guidance; via its function in O-mannosylation of alpha-dystroglycan (DAG1). The polypeptide is Beta-1,4-glucuronyltransferase 1 (Pongo abelii (Sumatran orangutan)).